Consider the following 248-residue polypeptide: Putative mutator protein MutT4 (248 aa).

The disordered stretch occupies residues 1–64; sequence MSDGEQAKSR…GSTRMRTVHE (64 aa). Positions 9-20 are enriched in basic residues; the sequence is SRRRRGRRRGRR. Positions 31–44 are enriched in low complexity; the sequence is AQPAGDATPTPATA. Basic residues predominate over residues 45 to 57; the sequence is KRSRSRSPRRGST. Residues 62 to 198 form the Nudix hydrolase domain; the sequence is VHETSAGGLV…DERRLAEVAD (137 aa). Positions 103, 118, 121, and 122 each coordinate Mg(2+). The Nudix box signature appears at 103–124; sequence GHIELGETAEQTAIREVAEETG. The interval 204-248 is disordered; sequence LQSDGPAALPPLPPSSPRRRPQTHSRARHADDSAPGQHNGPGPGP. Residues 220–230 show a composition bias toward basic residues; it reads PRRRPQTHSRA.

This sequence belongs to the Nudix hydrolase family. Mg(2+) is required as a cofactor. Mn(2+) serves as cofactor.

In terms of biological role, may be involved in the GO system responsible for removing an oxidatively damaged form of guanine (7,8-dihydro-8-oxoguanine, 8-oxo-dGTP) from DNA and the nucleotide pool. This chain is Putative mutator protein MutT4 (mutT4), found in Mycobacterium tuberculosis (strain CDC 1551 / Oshkosh).